An 898-amino-acid polypeptide reads, in one-letter code: Serine/threonine-protein kinase TAO3 (898 aa).

Positions 24–277 (FVGLHEIGHG…SADLLRHDFV (254 aa)) constitute a Protein kinase domain. ATP-binding positions include 30–38 (IGHGSFGAV) and lysine 53. The active-site Proton acceptor is aspartate 147. The disordered stretch occupies residues 316 to 374 (TRNGPLTESQEEEEDSEHGSNLSRKMDSLGSNHSIPSMSVSTGSQSSSVSSMQEVLDES). The span at 334–351 (GSNLSRKMDSLGSNHSIP) shows a compositional bias: polar residues. The segment covering 352-368 (SMSVSTGSQSSSVSSMQ) has biased composition (low complexity). Coiled-coil stretches lie at residues 452–502 (EQEN…THAN), 548–649 (FLES…HAML), and 754–875 (LKSL…IETF). Positions 565 to 596 (EEMNEDHSTPKKEKQERISKHKENLQHTQAEE) are disordered.

Belongs to the protein kinase superfamily. STE Ser/Thr protein kinase family. STE20 subfamily.

It is found in the cytoplasm. Its subcellular location is the cell membrane. The protein resides in the membrane raft. The protein localises to the lipid droplet. It catalyses the reaction L-seryl-[protein] + ATP = O-phospho-L-seryl-[protein] + ADP + H(+). It carries out the reaction L-threonyl-[protein] + ATP = O-phospho-L-threonyl-[protein] + ADP + H(+). Serine/threonine-protein kinase that acts as a regulator of the p38/MAPK14 stress-activated MAPK cascade and of the MAPK8/JNK cascade. In response to DNA damage, involved in the G2/M transition DNA damage checkpoint by activating the p38/MAPK14 stress-activated MAPK cascade, probably by mediating phosphorylation of upstream MAP kinase kinases. Inhibits basal activity of the MAPK8/JNK cascade. The chain is Serine/threonine-protein kinase TAO3 (TAOK3) from Gallus gallus (Chicken).